The following is a 144-amino-acid chain: Nucleoside diphosphate kinase (144 aa).

Residues Lys11, Phe59, Arg87, Thr93, Arg104, and Asn114 each contribute to the ATP site. The active-site Pros-phosphohistidine intermediate is the His117.

Belongs to the NDK family. As to quaternary structure, homotetramer. Mg(2+) is required as a cofactor.

Its subcellular location is the cytoplasm. The enzyme catalyses a 2'-deoxyribonucleoside 5'-diphosphate + ATP = a 2'-deoxyribonucleoside 5'-triphosphate + ADP. It carries out the reaction a ribonucleoside 5'-diphosphate + ATP = a ribonucleoside 5'-triphosphate + ADP. Its function is as follows. Major role in the synthesis of nucleoside triphosphates other than ATP. The ATP gamma phosphate is transferred to the NDP beta phosphate via a ping-pong mechanism, using a phosphorylated active-site intermediate. The polypeptide is Nucleoside diphosphate kinase (Vibrio atlanticus (strain LGP32) (Vibrio splendidus (strain Mel32))).